A 362-amino-acid polypeptide reads, in one-letter code: RNA-binding protein 4 (362 aa).

RRM domains are found at residues 2 to 72 (VKLF…ASKN) and 78 to 148 (TKLH…LSTS). A Glycyl lysine isopeptide (Lys-Gly) (interchain with G-Cter in SUMO2) cross-link involves residue lysine 79. The residue at position 86 (serine 86) is a Phosphoserine. Lysine 92 is covalently cross-linked (Glycyl lysine isopeptide (Lys-Gly) (interchain with G-Cter in SUMO2)). Residues 160–177 (SGCYRCGKEGHWSKECPV) form a CCHC-type zinc finger. Positions 196-362 (AVRTPYTMGY…YADRARYSAF (167 aa)) are interaction with TNPO3. A disordered region spans residues 306–336 (RSPLRRATGPVPTVGEGYGYGHESELSQGSS). Serine 307 is modified (phosphoserine).

In terms of assembly, interacts with TNPO3; the interaction mediates nuclear import of the protein and is disrupted by nuclear Ran bound to GTP. Interacts with EIF4G1 and WT1. Interacts with EIF4A1; the interaction is modulated under stress-induced conditions. Interacts with AGO1. Interacts with AGO2; the interaction occurs under both cell proliferation and differentiation conditions and in an RNA- and phosphorylation-independent manner. Interacts with DDX5; the interaction occurs in an RNA-independent manner. Interacts with RBPMS; the interaction allows cooperative assembly of RNA-bound stable cell-specific alternative splicing regulatory complexes. Phosphorylated. Phosphorylated in vitro on Ser-307 by SRPK1. Phosphorylation on Ser-307 is induced upon cell stress signaling, which alters its subcellular localization and may modulate its activity on IRES-mediated mRNA translation. Phosphorylation on Ser-307 is induced upon cell muscle differentiation.

It localises to the nucleus. It is found in the nucleolus. The protein resides in the nucleus speckle. Its subcellular location is the cytoplasm. The protein localises to the cytoplasmic granule. RNA-binding factor involved in multiple aspects of cellular processes like alternative splicing of pre-mRNA and translation regulation. Modulates alternative 5'-splice site and exon selection. Acts as a muscle cell differentiation-promoting factor. Activates exon skipping of the PTB pre-mRNA during muscle cell differentiation. Antagonizes the activity of the splicing factor PTBP1 to modulate muscle cell-specific exon selection of alpha tropomyosin. Binds to intronic pyrimidine-rich sequence of the TPM1 and MAPT pre-mRNAs. Required for the translational activation of PER1 mRNA in response to circadian clock. Binds directly to the 3'-UTR of the PER1 mRNA. Exerts a suppressive activity on Cap-dependent translation via binding to CU-rich responsive elements within the 3'UTR of mRNAs, a process increased under stress conditions or during myocytes differentiation. Recruits EIF4A1 to stimulate IRES-dependent translation initiation in respons to cellular stress. Associates to internal ribosome entry segment (IRES) in target mRNA species under stress conditions. Plays a role for miRNA-guided RNA cleavage and translation suppression by promoting association of AGO2-containing miRNPs with their cognate target mRNAs. Associates with miRNAs during muscle cell differentiation. Binds preferentially to 5'-CGCGCG[GCA]-3' motif in vitro. The polypeptide is RNA-binding protein 4 (RBM4) (Bos taurus (Bovine)).